The sequence spans 161 residues: uncharacterized protein (161 aa).

This is an uncharacterized protein from Lepidoptera (butterflies and moths).